Reading from the N-terminus, the 229-residue chain is Large ribosomal subunit protein uL1 (229 aa).

Belongs to the universal ribosomal protein uL1 family. In terms of assembly, part of the 50S ribosomal subunit.

Binds directly to 23S rRNA. The L1 stalk is quite mobile in the ribosome, and is involved in E site tRNA release. Functionally, protein L1 is also a translational repressor protein, it controls the translation of the L11 operon by binding to its mRNA. The sequence is that of Large ribosomal subunit protein uL1 from Bifidobacterium animalis subsp. lactis (strain AD011).